Here is a 54-residue protein sequence, read N- to C-terminus: UPF0391 membrane protein TERTU_3637 (54 aa).

2 consecutive transmembrane segments (helical) span residues 4-24 and 29-49; these read WALV…TGLA and SIAW…LVAG.

This sequence belongs to the UPF0391 family.

It is found in the cell membrane. In Teredinibacter turnerae (strain ATCC 39867 / T7901), this protein is UPF0391 membrane protein TERTU_3637.